The following is a 185-amino-acid chain: Ribosome-recycling factor (185 aa).

This sequence belongs to the RRF family.

The protein localises to the cytoplasm. In terms of biological role, responsible for the release of ribosomes from messenger RNA at the termination of protein biosynthesis. May increase the efficiency of translation by recycling ribosomes from one round of translation to another. This chain is Ribosome-recycling factor, found in Coxiella burnetii (strain RSA 493 / Nine Mile phase I).